The primary structure comprises 549 residues: Undecaprenyl phosphate-alpha-4-amino-4-deoxy-L-arabinose arabinosyl transferase (549 aa).

Helical transmembrane passes span 9–29 (LLLI…GLWI), 80–100 (LFGV…LAYL), 112–132 (SLAC…SGYA), 136–156 (PQFT…LDAG), 166–186 (ILLG…AWLL), 204–224 (LLGY…PWAL), 256–276 (PWWF…GLLP), 288–308 (QAPV…FSLS), 312–332 (LPTY…HALV), 346–366 (NGLL…YLQL), 376–396 (FELF…LAQW), and 402–422 (AWAA…AAMP).

It belongs to the glycosyltransferase 83 family.

It is found in the cell inner membrane. It carries out the reaction 4-amino-4-deoxy-alpha-L-arabinopyranosyl di-trans,octa-cis-undecaprenyl phosphate + lipid IVA = lipid IIA + di-trans,octa-cis-undecaprenyl phosphate.. The protein operates within lipopolysaccharide metabolism; 4-amino-4-deoxy-beta-L-arabinose-lipid A biosynthesis. Its function is as follows. Catalyzes the transfer of the L-Ara4N moiety of the glycolipid undecaprenyl phosphate-alpha-L-Ara4N to lipid A. The modified arabinose is attached to lipid A and is required for resistance to polymyxin and cationic antimicrobial peptides. The protein is Undecaprenyl phosphate-alpha-4-amino-4-deoxy-L-arabinose arabinosyl transferase of Pseudomonas aeruginosa (strain UCBPP-PA14).